The sequence spans 271 residues: HTH-type transcriptional repressor AllR (271 aa).

Positions 21–83 (AQALERGIAI…SQLGWWHIGL (63 aa)) constitute an HTH iclR-type domain. Residues 43–62 (VSDISLNLDLPLSTTFRLLK) constitute a DNA-binding region (H-T-H motif). In terms of domain architecture, IclR-ED spans 98 to 267 (VLSVAGPFMR…ARDISTALGL (170 aa)). Residues 154-156 (SGA), Asp-207, Cys-217, and 234-236 (SIS) each bind glyoxylate.

Its function is as follows. Negative regulator of allantoin and glyoxylate utilization operons. Binds to the gcl promoter and to the allS-allA intergenic region. The chain is HTH-type transcriptional repressor AllR (allR) from Escherichia coli (strain UTI89 / UPEC).